Consider the following 291-residue polypeptide: Beta-lactamase OXY-1 (291 aa).

Residues 1-24 form the signal peptide; sequence MLKSSWRKTALMAAAAVPLLLASG. The active-site Acyl-ester intermediate is the Ser-73. Residue 237–239 coordinates substrate; it reads KTG.

It belongs to the class-A beta-lactamase family.

The catalysed reaction is a beta-lactam + H2O = a substituted beta-amino acid. In terms of biological role, hydrolyzes broad-spectrum beta-lactam antibiotics. Active against cephalosporins. In Klebsiella oxytoca, this protein is Beta-lactamase OXY-1 (bla).